We begin with the raw amino-acid sequence, 231 residues long: NADH-ubiquinone oxidoreductase chain 4 (231 aa).

The next 7 membrane-spanning stretches (helical) occupy residues 1–21, 34–54, 61–80, 84–106, 128–148, 156–176, and 211–231; these read PIAG…YGII, VFLP…LTCL, SLIA…AIII, WGLS…LFCL, ILPM…ATPP, LLII…LGLS, and LLMI…ELVI.

This sequence belongs to the complex I subunit 4 family.

It localises to the mitochondrion membrane. It catalyses the reaction a ubiquinone + NADH + 5 H(+)(in) = a ubiquinol + NAD(+) + 4 H(+)(out). Its function is as follows. Core subunit of the mitochondrial membrane respiratory chain NADH dehydrogenase (Complex I) that is believed to belong to the minimal assembly required for catalysis. Complex I functions in the transfer of electrons from NADH to the respiratory chain. The immediate electron acceptor for the enzyme is believed to be ubiquinone. This chain is NADH-ubiquinone oxidoreductase chain 4 (MT-ND4), found in Tropidolaemus wagleri (Wagler's pit viper).